The following is a 344-amino-acid chain: GTPase Obg (344 aa).

An Obg domain is found at 1-159 (MKFLDEAKVY…MWLILRLKLI (159 aa)). The region spanning 160–327 (ADAGLVGLPN…ALRAIQAQLD (168 aa)) is the OBG-type G domain. GTP contacts are provided by residues 166–173 (GLPNAGKS), 191–195 (FTTLH), 212–215 (DIPG), 279–282 (SKAD), and 308–310 (SAA). 2 residues coordinate Mg(2+): S173 and T193.

It belongs to the TRAFAC class OBG-HflX-like GTPase superfamily. OBG GTPase family. As to quaternary structure, monomer. It depends on Mg(2+) as a cofactor.

The protein resides in the cytoplasm. An essential GTPase which binds GTP, GDP and possibly (p)ppGpp with moderate affinity, with high nucleotide exchange rates and a fairly low GTP hydrolysis rate. Plays a role in control of the cell cycle, stress response, ribosome biogenesis and in those bacteria that undergo differentiation, in morphogenesis control. The chain is GTPase Obg from Methylorubrum populi (strain ATCC BAA-705 / NCIMB 13946 / BJ001) (Methylobacterium populi).